A 611-amino-acid chain; its full sequence is Aspartate--tRNA(Asp/Asn) ligase (611 aa).

Residue Glu-174 participates in L-aspartate binding. Positions 198–201 (QLFK) are aspartate. L-aspartate is bound at residue Arg-220. ATP contacts are provided by residues 220–222 (RDE) and Gln-229. His-467 is a binding site for L-aspartate. Position 501 (Glu-501) interacts with ATP. Arg-508 lines the L-aspartate pocket. Position 553-556 (553-556 (GLDR)) interacts with ATP.

Belongs to the class-II aminoacyl-tRNA synthetase family. Type 1 subfamily. Homodimer.

It is found in the cytoplasm. It catalyses the reaction tRNA(Asx) + L-aspartate + ATP = L-aspartyl-tRNA(Asx) + AMP + diphosphate. Aspartyl-tRNA synthetase with relaxed tRNA specificity since it is able to aspartylate not only its cognate tRNA(Asp) but also tRNA(Asn). Reaction proceeds in two steps: L-aspartate is first activated by ATP to form Asp-AMP and then transferred to the acceptor end of tRNA(Asp/Asn). The sequence is that of Aspartate--tRNA(Asp/Asn) ligase from Albidiferax ferrireducens (strain ATCC BAA-621 / DSM 15236 / T118) (Rhodoferax ferrireducens).